An 821-amino-acid polypeptide reads, in one-letter code: Cation/H(+) antiporter 15 (821 aa).

13 helical membrane passes run 37–57 (LPLF…FVFI), 65–82 (RVIS…SVLG), 97–117 (VMVL…LVGV), 131–151 (ALTI…AFSF), 166–186 (ILFL…RILA), 200–220 (MSAA…AIAL), 228–248 (FASL…VFVV), 268–288 (FHIC…DAIG), 292–312 (VFGA…LTLI), 318–338 (FVSG…TNIA), 350–370 (FLVI…VAFF), 378–398 (GITL…VLNV), and 410–430 (FATM…IVTI). Residues 800-821 (DFPESPVHSHETKVTYGLENPR) form a disordered region.

It belongs to the monovalent cation:proton antiporter 2 (CPA2) transporter (TC 2.A.37) family. CHX (TC 2.A.37.4) subfamily. Specifically expressed in pollen.

The protein localises to the membrane. May operate as a cation/H(+) antiporter. This is Cation/H(+) antiporter 15 (CHX15) from Arabidopsis thaliana (Mouse-ear cress).